The primary structure comprises 78 residues: Delta-conotoxin-like Ai6.1 (78 aa).

The N-terminal stretch at 1-22 (MKLTCVMIVAVLFLTAWTFATA) is a signal peptide. Positions 23–49 (DDPRNGLGNLFSNAHHEMKNPEASKLN) are excised as a propeptide. Cystine bridges form between cysteine 53–cysteine 68, cysteine 60–cysteine 72, and cysteine 67–cysteine 77.

This sequence belongs to the conotoxin O1 superfamily. Expressed by the venom duct.

Its subcellular location is the secreted. Its function is as follows. Delta-conotoxins bind to site 6 of voltage-gated sodium channels (Nav) and inhibit the inactivation process. The protein is Delta-conotoxin-like Ai6.1 of Conus ammiralis (Admiral cone).